Here is a 272-residue protein sequence, read N- to C-terminus: TLC domain-containing protein 4 C (272 aa).

Transmembrane regions (helical) follow at residues 16 to 36 (FSNS…FIIY), 71 to 91 (VSMI…VESF), 103 to 123 (SLLM…IICY), 128 to 148 (LVGT…IYVA), 155 to 175 (CFVP…PLNM), 196 to 216 (FVIT…IYLV), and 233 to 253 (VFIT…FLLI). The region spanning 61 to 261 (KKKLEWDQRV…LIKKLYQTYL (201 aa)) is the TLC domain.

The protein belongs to the TLCD4 family.

It is found in the membrane. This Dictyostelium discoideum (Social amoeba) protein is TLC domain-containing protein 4 C (tlcd4c).